The sequence spans 207 residues: 8-oxoguanine DNA glycosylase/AP lyase (207 aa).

Residues Lys-128 and Asp-146 contribute to the active site.

The protein belongs to the type-2 OGG1 family.

It carries out the reaction 2'-deoxyribonucleotide-(2'-deoxyribose 5'-phosphate)-2'-deoxyribonucleotide-DNA = a 3'-end 2'-deoxyribonucleotide-(2,3-dehydro-2,3-deoxyribose 5'-phosphate)-DNA + a 5'-end 5'-phospho-2'-deoxyribonucleoside-DNA + H(+). Catalyzes the excision of an oxidatively damaged form of guanine (7,8-dihydro-8-oxoguanine = 8-oxoG) from DNA. Also cleaves the DNA backbone at apurinic/apyrimidinic sites (AP sites). This Saccharolobus islandicus (strain L.S.2.15 / Lassen #1) (Sulfolobus islandicus) protein is 8-oxoguanine DNA glycosylase/AP lyase.